The following is a 254-amino-acid chain: 3-deoxy-manno-octulosonate cytidylyltransferase (254 aa).

It belongs to the KdsB family.

Its subcellular location is the cytoplasm. The enzyme catalyses 3-deoxy-alpha-D-manno-oct-2-ulosonate + CTP = CMP-3-deoxy-beta-D-manno-octulosonate + diphosphate. It participates in nucleotide-sugar biosynthesis; CMP-3-deoxy-D-manno-octulosonate biosynthesis; CMP-3-deoxy-D-manno-octulosonate from 3-deoxy-D-manno-octulosonate and CTP: step 1/1. Its pathway is bacterial outer membrane biogenesis; lipopolysaccharide biosynthesis. In terms of biological role, activates KDO (a required 8-carbon sugar) for incorporation into bacterial lipopolysaccharide in Gram-negative bacteria. The sequence is that of 3-deoxy-manno-octulosonate cytidylyltransferase from Chlamydia abortus (strain DSM 27085 / S26/3) (Chlamydophila abortus).